Reading from the N-terminus, the 1097-residue chain is Transmembrane protein 132D (1097 aa).

The signal sequence occupies residues 1-30 (MCPSEMGTLWYLWSPVLISLAALFSKVTEG). At 31–913 (RGILESIQRF…LDQAAKGLSD (883 aa)) the chain is on the extracellular side. Positions 233–245 (DERGDCAKEDSRK) are enriched in basic and acidic residues. Positions 233 to 263 (DERGDCAKEDSRKSGGTPAGHNDVDESSPPL) are disordered. The chain crosses the membrane as a helical span at residues 914–934 (LEIGMYALLGVFCLAILVFLI). Residues 935 to 1097 (NCVTFALKYR…SCMERLHEHV (163 aa)) lie on the Cytoplasmic side of the membrane. Residues 1021–1042 (MLTDDQEQKSEPPTSPTSKRKR) are disordered.

This sequence belongs to the TMEM132 family. In terms of tissue distribution, expressed in mature oligodendrocytes in the white and gray matter of the brain.

It localises to the membrane. Functionally, regulates neuronal morphology via inhibition of the WAVE regulatory complex (WCR), a complex that controls F-actin cytoskeletal dynamics. In Mus musculus (Mouse), this protein is Transmembrane protein 132D (Tmem132d).